We begin with the raw amino-acid sequence, 251 residues long: Prolactin-7B1 (251 aa).

A signal peptide spans 1–29 (MHLSLTQQCLWPLQILLVSNLLLWENVAA). An N-linked (GlcNAc...) asparagine glycan is attached at asparagine 73. Disulfide bonds link cysteine 100/cysteine 216 and cysteine 233/cysteine 241.

It belongs to the somatotropin/prolactin family.

It localises to the secreted. The sequence is that of Prolactin-7B1 (Prl7b1) from Rattus norvegicus (Rat).